The primary structure comprises 576 residues: D-lactate dehydrogenase [cytochrome], mitochondrial (576 aa).

One can recognise an FAD-binding PCMH-type domain in the interval 139-320 (EANQRPEIVL…TEATIKCHVR (182 aa)).

It belongs to the FAD-binding oxidoreductase/transferase type 4 family. FAD is required as a cofactor. Requires Zn(2+) as cofactor.

Its subcellular location is the mitochondrion matrix. The catalysed reaction is (R)-lactate + 2 Fe(III)-[cytochrome c] = 2 Fe(II)-[cytochrome c] + pyruvate + 2 H(+). In terms of biological role, catalyzes the stereospecific oxidation of D-lactate to pyruvate. The sequence is that of D-lactate dehydrogenase [cytochrome], mitochondrial (DLD1) from Kluyveromyces lactis (strain ATCC 8585 / CBS 2359 / DSM 70799 / NBRC 1267 / NRRL Y-1140 / WM37) (Yeast).